A 468-amino-acid chain; its full sequence is Flavin-containing monooxygenase FMO GS-OX-like 1 (468 aa).

16–21 contacts FAD; sequence GLGAAG. Residue 211-216 participates in NADP(+) binding; it reads GSQASG.

Belongs to the FMO family. It depends on FAD as a cofactor.

Its function is as follows. Catalyzes the conversion of methylthioalkyl glucosinolates of any chain length into methylsulfinylalkyl glucosinolates. The polypeptide is Flavin-containing monooxygenase FMO GS-OX-like 1 (Arabidopsis thaliana (Mouse-ear cress)).